A 73-amino-acid chain; its full sequence is uncharacterized protein (73 aa).

This is an uncharacterized protein from Autographa californica nuclear polyhedrosis virus (AcMNPV).